The chain runs to 123 residues: Large ribosomal subunit protein bL12 (123 aa).

The protein belongs to the bacterial ribosomal protein bL12 family. As to quaternary structure, homodimer. Part of the ribosomal stalk of the 50S ribosomal subunit. Forms a multimeric L10(L12)X complex, where L10 forms an elongated spine to which 2 to 4 L12 dimers bind in a sequential fashion. Binds GTP-bound translation factors.

Functionally, forms part of the ribosomal stalk which helps the ribosome interact with GTP-bound translation factors. Is thus essential for accurate translation. In Bartonella tribocorum (strain CIP 105476 / IBS 506), this protein is Large ribosomal subunit protein bL12.